We begin with the raw amino-acid sequence, 170 residues long: Adenine phosphoribosyltransferase (170 aa).

It belongs to the purine/pyrimidine phosphoribosyltransferase family. In terms of assembly, homodimer.

The protein localises to the cytoplasm. It carries out the reaction AMP + diphosphate = 5-phospho-alpha-D-ribose 1-diphosphate + adenine. It participates in purine metabolism; AMP biosynthesis via salvage pathway; AMP from adenine: step 1/1. In terms of biological role, catalyzes a salvage reaction resulting in the formation of AMP, that is energically less costly than de novo synthesis. The sequence is that of Adenine phosphoribosyltransferase from Bacillus velezensis (strain DSM 23117 / BGSC 10A6 / LMG 26770 / FZB42) (Bacillus amyloliquefaciens subsp. plantarum).